The sequence spans 76 residues: Peptide ARACIN 1 (76 aa).

Residues 1–22 (MAMKTSHVLLLCLMFVIGFVEA) form the signal peptide. The propeptide at 23-35 (RRSDTGPDISTPP) is removed in mature form. The SxS motif essential for MIK2 binding motif lies at 36–38 (SGS). Positions 36 to 49 (SGSCGASIAEFNSS) match the SCOOP motif motif. Residues 56–76 (APPCRRPRLQNSEDVTHTTLP) form a disordered region. Positions 64–76 (LQNSEDVTHTTLP) are enriched in polar residues.

This sequence belongs to the serine rich endogenous peptide (SCOOP) phytocytokine family. In terms of assembly, interacts with MIK2 (via extracellular leucine-rich repeat domain); this interaction triggers the formation of complex between MIK2 and the BAK1/SERK3 and SERK4 coreceptors, and subsequent BAK1 activation by phosphorylation. Mainly expressed in young developing leaves, hydathodes, immature flowers and elongating pollen tubes.

It is found in the cell membrane. The protein resides in the secreted. Its subcellular location is the extracellular space. The protein localises to the apoplast. It localises to the endoplasmic reticulum. Brassicaceae-specific phytocytokine (plant endogenous peptide released into the apoplast) perceived by MIK2 in a BAK1/SERK3 and SERK4 coreceptors-dependent manner, that modulates various physiological and antimicrobial processes including growth prevention and reactive oxygen species (ROS) response regulation. Inhibits the fungal growth of Alternaria brassicicola, Sclerotinia sclerotiorum, Fusarium graminearum, yeast (Saccharomyces) and Botrytis cinerea, thus being an antimicrobial peptide (AMP). Promotes resistance to A.brassicicola and B.cinerea. This is Peptide ARACIN 1 from Arabidopsis thaliana (Mouse-ear cress).